The following is a 207-amino-acid chain: Large ribosomal subunit protein bL25 (207 aa).

This sequence belongs to the bacterial ribosomal protein bL25 family. CTC subfamily. In terms of assembly, part of the 50S ribosomal subunit; part of the 5S rRNA/L5/L18/L25 subcomplex. Contacts the 5S rRNA. Binds to the 5S rRNA independently of L5 and L18.

Its function is as follows. This is one of the proteins that binds to the 5S RNA in the ribosome where it forms part of the central protuberance. The sequence is that of Large ribosomal subunit protein bL25 from Rhizorhabdus wittichii (strain DSM 6014 / CCUG 31198 / JCM 15750 / NBRC 105917 / EY 4224 / RW1) (Sphingomonas wittichii).